The sequence spans 1077 residues: ATP-dependent helicase/deoxyribonuclease subunit B (1077 aa).

This sequence belongs to the helicase family. AddB/RexB type 2 subfamily. In terms of assembly, heterodimer of AddA and RexB. Mg(2+) is required as a cofactor.

The heterodimer acts as both an ATP-dependent DNA helicase and an ATP-dependent, dual-direction single-stranded exonuclease. Recognizes the chi site generating a DNA molecule suitable for the initiation of homologous recombination. This subunit has 5' -&gt; 3' nuclease activity but not helicase activity. The sequence is that of ATP-dependent helicase/deoxyribonuclease subunit B from Streptococcus agalactiae serotype III (strain NEM316).